The chain runs to 313 residues: Expansin-like A4 (313 aa).

A signal peptide spans 1 to 30 (MDDNGDVHFCHRATAVVALLLLHLVVVANA). The region spanning 59 to 173 (GGACGFGAAP…RRIPCEYRES (115 aa)) is the Expansin-like EG45 domain. A glycan (N-linked (GlcNAc...) asparagine) is linked at Asn-124. The Expansin-like CBD domain occupies 188–281 (THLAIRFLYQ…DWRPGEVYDT (94 aa)).

It belongs to the expansin family. Expansin-like A subfamily.

Its subcellular location is the secreted. This is Expansin-like A4 (EXLA4) from Oryza sativa subsp. japonica (Rice).